A 74-amino-acid polypeptide reads, in one-letter code: Mitochondrial import receptor subunit TOM6 homolog (74 aa).

The segment covering 1 to 14 has biased composition (low complexity); the sequence is MASSGAGVTAAGSA. The segment at 1–24 is disordered; it reads MASSGAGVTAAGSANEAPEIPDNV. At Ala2 the chain carries N-acetylalanine.

The protein belongs to the Tom6 family. Forms part of the preprotein translocase complex of the outer mitochondrial membrane (TOM complex) which consists of at least 7 different proteins (TOMM5, TOMM6, TOMM7, TOMM20, TOMM22, TOMM40 and TOMM70).

The protein localises to the mitochondrion outer membrane. The polypeptide is Mitochondrial import receptor subunit TOM6 homolog (TOMM6) (Bos taurus (Bovine)).